A 90-amino-acid polypeptide reads, in one-letter code: UPF0184 protein (90 aa).

Positions 16–78 (DETKEEMVEL…QSLETEQNTE (63 aa)) form a coiled coil. Residues 57 to 90 (SQQARQELQAERQSLETEQNTEPSTKSDQEQKKQ) form a disordered region. Positions 81 to 90 (TKSDQEQKKQ) are enriched in basic and acidic residues.

It belongs to the UPF0184 (EST00098) family.

In Branchiostoma floridae (Florida lancelet), this protein is UPF0184 protein.